A 61-amino-acid polypeptide reads, in one-letter code: uncharacterized protein (61 aa).

This is an uncharacterized protein from Methanocaldococcus jannaschii (strain ATCC 43067 / DSM 2661 / JAL-1 / JCM 10045 / NBRC 100440) (Methanococcus jannaschii).